The primary structure comprises 434 residues: 3-isopropylmalate dehydratase large subunit 1 (434 aa).

[4Fe-4S] cluster contacts are provided by Cys308, Cys368, and Cys371.

This sequence belongs to the aconitase/IPM isomerase family. LeuC type 2 subfamily. Heterodimer of LeuC and LeuD. It depends on [4Fe-4S] cluster as a cofactor.

It carries out the reaction (2R,3S)-3-isopropylmalate = (2S)-2-isopropylmalate. It functions in the pathway amino-acid biosynthesis; L-leucine biosynthesis; L-leucine from 3-methyl-2-oxobutanoate: step 2/4. Functionally, catalyzes the isomerization between 2-isopropylmalate and 3-isopropylmalate, via the formation of 2-isopropylmaleate. The protein is 3-isopropylmalate dehydratase large subunit 1 of Deinococcus radiodurans (strain ATCC 13939 / DSM 20539 / JCM 16871 / CCUG 27074 / LMG 4051 / NBRC 15346 / NCIMB 9279 / VKM B-1422 / R1).